The following is an 864-amino-acid chain: DNA mismatch repair protein MutS (864 aa).

607–614 (GPNMGGKS) lines the ATP pocket.

Belongs to the DNA mismatch repair MutS family.

Its function is as follows. This protein is involved in the repair of mismatches in DNA. It is possible that it carries out the mismatch recognition step. This protein has a weak ATPase activity. This Neisseria meningitidis serogroup C (strain 053442) protein is DNA mismatch repair protein MutS.